Consider the following 813-residue polypeptide: Homeobox-leucine zipper protein ROC4 (813 aa).

The tract at residues 62 to 112 (EVENEMSRSGSDHLDVVSCGDAGGGGGDDDDDEDAEHGNPPKRKKRYHRHT) is disordered. Positions 101–112 (PPKRKKRYHRHT) are enriched in basic residues. The homeobox DNA-binding region spans 104-163 (RKKRYHRHTPQQIQELEAMFKECPHPDEKQRAELSKRLGLEPRQVKFWFQNRRTQMKMQL). A coiled-coil region spans residues 152-191 (FQNRRTQMKMQLERHENSLLKQENDKLRSENLSIREATSN). The START domain maps to 306–559 (AGIDKSLFLE…LQRQCECLAL (254 aa)).

Belongs to the HD-ZIP homeobox family. Class IV subfamily.

The protein resides in the nucleus. In terms of biological role, probable transcription factor. The polypeptide is Homeobox-leucine zipper protein ROC4 (ROC4) (Oryza sativa subsp. japonica (Rice)).